The primary structure comprises 457 residues: C4-dicarboxylate transport protein (457 aa).

The next 9 membrane-spanning stretches (helical) occupy residues 22–42, 55–75, 90–110, 138–158, 168–188, 209–229, 242–262, 335–357, and 376–396; these read FQVVVAIILGALLGRFEPAFA, LVKMIIAPVIFLTIVTGIAGM, VYFLFFSTLALVVGLVVAHVV, LTLVGFLMDIIPNSLIGAFTG, GPNILQVLFVAVLFGVSLALV, LVHILMRAAPIGAFGAIAFTI, WLVGSFYLTSLLFVLVILGVV, LFIAQATNTELTLGHQIALLAVA, and AATLAVVPEVPVAGMALILGV.

It belongs to the dicarboxylate/amino acid:cation symporter (DAACS) (TC 2.A.23) family.

It localises to the cell inner membrane. Functionally, responsible for the transport of dicarboxylates such as succinate, fumarate, and malate from the periplasm across the membrane. The protein is C4-dicarboxylate transport protein of Xanthomonas oryzae pv. oryzae (strain MAFF 311018).